The following is a 145-amino-acid chain: uncharacterized protein (145 aa).

An N-terminal signal peptide occupies residues 1 to 20; that stretch reads MPSKVCTLILLFSVINQMKC.

This is an uncharacterized protein from Caenorhabditis elegans.